The chain runs to 838 residues: Pentatricopeptide repeat-containing protein At4g19440, chloroplastic (838 aa).

The transit peptide at 1 to 32 directs the protein to the chloroplast; it reads MAALLYFPKISSQMTSSHFISFSPMDLRRLSR. PPR repeat units lie at residues 238–268, 272–306, 307–341, 342–376, 377–411, 412–446, 447–481, 482–516, 517–551, 552–586, 587–621, 622–656, 657–691, 692–726, 727–761, and 762–796; these read SKTTCNILLTSLVRANEFQKCCEAFDVVCKG, DVYLFTTAINAFCKGGKVEEAVKLFSKMEEAGVAP, NVVTFNTVIDGLGMCGRYDEAFMFKEKMVERGMEP, TLITYSILVKGLTRAKRIGDAYFVLKEMTKKGFPP, NVIVYNNLIDSFIEAGSLNKAIEIKDLMVSKGLSL, TSSTYNTLIKGYCKNGQADNAERLLKEMLSIGFNV, NQGSFTSVICLLCSHLMFDSALRFVGEMLLRNMSP, GGGLLTTLISGLCKHGKHSKALELWFQFLNKGFVV, DTRTSNALLHGLCEAGKLDEAFRIQKEILGRGCVM, DRVSYNTLISGCCGKKKLDEAFMFLDEMVKRGLKP, DNYTYSILICGLFNMNKVEEAIQFWDDCKRNGMLP, DVYTYSVMIDGCCKAERTEEGQEFFDEMMSKNVQP, NTVVYNHLIRAYCRSGRLSMALELREDMKHKGISP, NSATYTSLIKGMSIISRVEEAKLLFEEMRMEGLEP, NVFHYTALIDGYGKLGQMVKVECLLREMHSKNVHP, and NKITYTVMIGGYARDGNVTEASRLLNEMREKGIVP.

Belongs to the PPR family. P subfamily.

Its subcellular location is the plastid. The protein localises to the chloroplast. This Arabidopsis thaliana (Mouse-ear cress) protein is Pentatricopeptide repeat-containing protein At4g19440, chloroplastic.